The sequence spans 622 residues: V-type ATP synthase subunit I 1 (622 aa).

8 helical membrane passes run 306-326 (WVNL…YWEV), 328-348 (ISGF…ADAG), 373-393 (PAWC…ALVC), 428-448 (QMHV…LIVV), 459-479 (AEFG…NLIV), 485-505 (PLTG…FIFV), 532-552 (VFAD…GGAI), and 562-582 (PLFA…GHGL).

This sequence belongs to the V-ATPase 116 kDa subunit family.

It is found in the cell membrane. Produces ATP from ADP in the presence of a proton gradient across the membrane. This Treponema pallidum (strain Nichols) protein is V-type ATP synthase subunit I 1 (atpI1).